The sequence spans 109 residues: Nucleoid-associated protein Plut_1285 (109 aa).

This sequence belongs to the YbaB/EbfC family. In terms of assembly, homodimer.

It is found in the cytoplasm. The protein localises to the nucleoid. Its function is as follows. Binds to DNA and alters its conformation. May be involved in regulation of gene expression, nucleoid organization and DNA protection. In Chlorobium luteolum (strain DSM 273 / BCRC 81028 / 2530) (Pelodictyon luteolum), this protein is Nucleoid-associated protein Plut_1285.